Reading from the N-terminus, the 868-residue chain is Leucine--tRNA ligase (868 aa).

Positions 42-52 match the 'HIGH' region motif; that stretch reads PYPSGKLHMGH. The 'KMSKS' region signature appears at 627 to 631; sequence KMSKS. Lys630 is a binding site for ATP.

The protein belongs to the class-I aminoacyl-tRNA synthetase family.

The protein localises to the cytoplasm. It carries out the reaction tRNA(Leu) + L-leucine + ATP = L-leucyl-tRNA(Leu) + AMP + diphosphate. The chain is Leucine--tRNA ligase from Pseudomonas entomophila (strain L48).